A 272-amino-acid chain; its full sequence is Sugar-phosphatase AraL (272 aa).

Belongs to the HAD-like hydrolase superfamily. Requires Mg(2+) as cofactor.

It carries out the reaction sugar phosphate + H2O = sugar + phosphate.. The catalysed reaction is O-phospho-L-serine + H2O = L-serine + phosphate. It catalyses the reaction O-phospho-D-serine + H2O = D-serine + phosphate. Catalyzes the dephosphorylation of C5 and C6 carbon sugars in vitro. Catalyzes the dephosphorylation of 3'-AMP and phosphoserine in vitro. The chain is Sugar-phosphatase AraL (araL) from Bacillus subtilis (strain 168).